The chain runs to 185 residues: uncharacterized protein (185 aa).

M1 carries the N-acetylmethionine modification. Composition is skewed to basic and acidic residues over residues 1–18 (MDAF…QDKQ), 26–47 (TPSD…TTEE), and 59–71 (SNED…PVLE). Disordered stretches follow at residues 1–71 (MDAF…PVLE) and 155–185 (DHDR…DGLL). Acidic residues predominate over residues 170-185 (LPEELETDQDFLDGLL).

This is an uncharacterized protein from Saccharomyces cerevisiae (strain ATCC 204508 / S288c) (Baker's yeast).